The sequence spans 522 residues: 4-chlorobenzoate--CoA ligase (522 aa).

Residues Thr161–Lys169, Asp300–Thr305, and Asn410 each bind ATP.

The protein belongs to the ATP-dependent AMP-binding enzyme family. In terms of assembly, homodimer. The cofactor is Mg(2+).

It catalyses the reaction 4-chlorobenzoate + ATP + CoA = 4-chlorobenzoyl-CoA + AMP + diphosphate. It functions in the pathway xenobiotic degradation; 4-chlorobenzoate degradation; 4-hydroxybenzoate from 4-chlorobenzoate: step 2/3. In terms of biological role, catalyzes the formation of chlorobenzoyl-CoA via a 2 step reaction. First 4-chlorobenzoate is adenylated by ATP, followed by acyl transfer from the 4-chlorobenzoyl-AMP intermediate to CoA. Benzoate, 4-bromobenzoate, 4-iodobenzoate and 4-fluorobenzoate also act as substrates. Inactive towards 4-nitrobenzoate. This is 4-chlorobenzoate--CoA ligase from Arthrobacter sp.